The chain runs to 282 residues: Probable methylxanthine N7-demethylase NdmC (282 aa).

It carries out the reaction 7-methylxanthine + NADPH + O2 + H(+) = xanthine + formaldehyde + NADP(+) + H2O. It catalyses the reaction 7-methylxanthine + NADH + O2 + H(+) = xanthine + formaldehyde + NAD(+) + H2O. Its function is as follows. Involved in the caffeine degradation, which is the essential first step for assimilating the carbon and nitrogen in caffeine. Probably catalyzes the N7-demethylation of 7-methylxanthine to produce xanthine and formaldehyde. In Pseudomonas sp. (strain TJI-51), this protein is Probable methylxanthine N7-demethylase NdmC.